Reading from the N-terminus, the 374-residue chain is Chaperone protein DnaJ (374 aa).

The J domain occupies D6 to G71. Residues G130–E209 form a CR-type zinc finger. Zn(2+) contacts are provided by C143, C146, C161, C164, C183, C186, C197, and C200. CXXCXGXG motif repeat units follow at residues C143–G150, C161–G168, C183–G190, and C197–G204.

This sequence belongs to the DnaJ family. Homodimer. Requires Zn(2+) as cofactor.

It is found in the cytoplasm. Its function is as follows. Participates actively in the response to hyperosmotic and heat shock by preventing the aggregation of stress-denatured proteins and by disaggregating proteins, also in an autonomous, DnaK-independent fashion. Unfolded proteins bind initially to DnaJ; upon interaction with the DnaJ-bound protein, DnaK hydrolyzes its bound ATP, resulting in the formation of a stable complex. GrpE releases ADP from DnaK; ATP binding to DnaK triggers the release of the substrate protein, thus completing the reaction cycle. Several rounds of ATP-dependent interactions between DnaJ, DnaK and GrpE are required for fully efficient folding. Also involved, together with DnaK and GrpE, in the DNA replication of plasmids through activation of initiation proteins. This chain is Chaperone protein DnaJ, found in Gluconacetobacter diazotrophicus (strain ATCC 49037 / DSM 5601 / CCUG 37298 / CIP 103539 / LMG 7603 / PAl5).